We begin with the raw amino-acid sequence, 428 residues long: Cell division cycle 20.6, cofactor of APC complex (428 aa).

WD repeat units lie at residues 106–145 (WFLTDNLVFFFVDIEEYIVIEQLGDTVYLWDASSCYTSKL), 150–189 (DENGPVTSINWTQDGLDLAVGLDNSEVQVWDCVSNRHVRT), 193–230 (GHESRVGSLAWNNHILTTGGMDGKIVNNDVRIRSSIIG), 234–273 (GHTEEVCGLKWSESGKKLASGGNDNVVHIWDRSLASSNPT), 282–324 (EHTA…CLNS), 326–367 (ETGS…KMAE), and 370–409 (GHTSRVLFMAQSPDGCTVASAAGDETLRLWNVFGEPPKTT).

It belongs to the WD repeat CDC20/Fizzy family. In terms of assembly, the APC/C is composed of at least 11 subunits that stay tightly associated throughout the cell cycle.

It localises to the nucleus. It participates in protein modification; protein ubiquitination. Functionally, component of the anaphase promoting complex/cyclosome (APC/C), a cell cycle-regulated E3 ubiquitin-protein ligase complex that controls progression through mitosis and the G1 phase of the cell cycle. This is Cell division cycle 20.6, cofactor of APC complex (CDC20-6) from Arabidopsis thaliana (Mouse-ear cress).